The sequence spans 227 residues: DNA repair protein RecO (227 aa).

The protein belongs to the RecO family.

Functionally, involved in DNA repair and RecF pathway recombination. The sequence is that of DNA repair protein RecO from Pseudomonas syringae pv. syringae (strain B728a).